The sequence spans 331 residues: MNAPHTPHLNEAEAAAAVEANAAELGRRALTRREQKEAYENNKLFKRLVRQVGQAIGDYNMIEHGDKVMVCLSGGKDSYALLDILLRLRERAPIDFDIVAVNLDQKQPGFPEHVLPEYLTKIGVPFHIENQDTYSIVKRLVPEGKTTCSLCSRLRRGILYRVAGELGATKIALGHHRDDIVQTLLLNMFYGGKLKGMPPKLQSDDGKNIVIRPLAYAKETDLEKYAELREFPIIPCNLCGSQPNLKRAEMKALIRDWDKRFPGRVDNMFNALANVVPSHLMDARLFPFAGLRATGEADPNGDIAFDEDPCGTDASAPGGAKSVSIVQFDDL.

Positions 73 to 78 (SGGKDS) match the PP-loop motif motif. Residues Cys-148, Cys-151, and Cys-239 each contribute to the [4Fe-4S] cluster site.

It belongs to the TtcA family. In terms of assembly, homodimer. It depends on Mg(2+) as a cofactor. [4Fe-4S] cluster serves as cofactor.

It is found in the cytoplasm. The enzyme catalyses cytidine(32) in tRNA + S-sulfanyl-L-cysteinyl-[cysteine desulfurase] + AH2 + ATP = 2-thiocytidine(32) in tRNA + L-cysteinyl-[cysteine desulfurase] + A + AMP + diphosphate + H(+). The protein operates within tRNA modification. In terms of biological role, catalyzes the ATP-dependent 2-thiolation of cytidine in position 32 of tRNA, to form 2-thiocytidine (s(2)C32). The sulfur atoms are provided by the cysteine/cysteine desulfurase (IscS) system. The polypeptide is tRNA-cytidine(32) 2-sulfurtransferase (Burkholderia mallei (strain NCTC 10247)).